The sequence spans 89 residues: Cytochrome c6 (89 aa).

Residues C15, C18, H19, and M61 each coordinate heme c.

It belongs to the cytochrome c family. PetJ subfamily. In terms of assembly, monomer. Post-translationally, binds 1 heme c group covalently per subunit.

It is found in the plastid. It localises to the chloroplast thylakoid lumen. Functionally, functions as an electron carrier between membrane-bound cytochrome b6-f and photosystem I in oxygenic photosynthesis. The protein is Cytochrome c6 (petJ) of Tetradesmus obliquus (Green alga).